Reading from the N-terminus, the 354-residue chain is Holliday junction branch migration complex subunit RuvB (354 aa).

Residues 4–190 (TDKLAAERII…FGIVARLEFY (187 aa)) are large ATPase domain (RuvB-L). ATP contacts are provided by residues L29, R30, G71, K74, T75, T76, 137 to 139 (EDY), R180, Y190, and R227. T75 provides a ligand contact to Mg(2+). The tract at residues 191–261 (NAEELARIVT…VADAALKMLD (71 aa)) is small ATPAse domain (RuvB-S). The interval 264–354 (AVGFDLMDRK…LPGLWDSAAT (91 aa)) is head domain (RuvB-H). Residues R300, R319, and R324 each contribute to the DNA site.

The protein belongs to the RuvB family. In terms of assembly, homohexamer. Forms an RuvA(8)-RuvB(12)-Holliday junction (HJ) complex. HJ DNA is sandwiched between 2 RuvA tetramers; dsDNA enters through RuvA and exits via RuvB. An RuvB hexamer assembles on each DNA strand where it exits the tetramer. Each RuvB hexamer is contacted by two RuvA subunits (via domain III) on 2 adjacent RuvB subunits; this complex drives branch migration. In the full resolvosome a probable DNA-RuvA(4)-RuvB(12)-RuvC(2) complex forms which resolves the HJ.

It localises to the cytoplasm. It carries out the reaction ATP + H2O = ADP + phosphate + H(+). Functionally, the RuvA-RuvB-RuvC complex processes Holliday junction (HJ) DNA during genetic recombination and DNA repair, while the RuvA-RuvB complex plays an important role in the rescue of blocked DNA replication forks via replication fork reversal (RFR). RuvA specifically binds to HJ cruciform DNA, conferring on it an open structure. The RuvB hexamer acts as an ATP-dependent pump, pulling dsDNA into and through the RuvAB complex. RuvB forms 2 homohexamers on either side of HJ DNA bound by 1 or 2 RuvA tetramers; 4 subunits per hexamer contact DNA at a time. Coordinated motions by a converter formed by DNA-disengaged RuvB subunits stimulates ATP hydrolysis and nucleotide exchange. Immobilization of the converter enables RuvB to convert the ATP-contained energy into a lever motion, pulling 2 nucleotides of DNA out of the RuvA tetramer per ATP hydrolyzed, thus driving DNA branch migration. The RuvB motors rotate together with the DNA substrate, which together with the progressing nucleotide cycle form the mechanistic basis for DNA recombination by continuous HJ branch migration. Branch migration allows RuvC to scan DNA until it finds its consensus sequence, where it cleaves and resolves cruciform DNA. The chain is Holliday junction branch migration complex subunit RuvB from Paraburkholderia phytofirmans (strain DSM 17436 / LMG 22146 / PsJN) (Burkholderia phytofirmans).